The sequence spans 433 residues: Ribonuclease T2-like (433 aa).

Intrachain disulfides connect cysteine 28-cysteine 47, cysteine 36-cysteine 95, cysteine 46-cysteine 171, and cysteine 103-cysteine 163. Asparagine 38 and asparagine 71 each carry an N-linked (GlcNAc...) asparagine glycan. Catalysis depends on residues histidine 88, glutamate 156, and histidine 160. 2 N-linked (GlcNAc...) asparagine glycosylation sites follow: asparagine 221 and asparagine 263. Cysteine 247 and cysteine 283 form a disulfide bridge.

The protein belongs to the RNase T2 family.

It is found in the vacuole lumen. Its subcellular location is the cytoplasm. The catalysed reaction is a ribonucleotidyl-ribonucleotide-RNA + H2O = a 3'-end 3'-phospho-ribonucleotide-RNA + a 5'-end dephospho-ribonucleoside-RNA + H(+). Rnase which modulates cell survival under stress conditions. Released from the vacuole to the cytoplasm during stress to promote tRNA and rRNA cleavage and to activate separately a downstream pathway that promotes cell death. Involved in cell size, vacuolar morphology and growth at high temperatures and high salt concentration. This Candida glabrata (strain ATCC 2001 / BCRC 20586 / JCM 3761 / NBRC 0622 / NRRL Y-65 / CBS 138) (Yeast) protein is Ribonuclease T2-like (RNY1).